A 457-amino-acid polypeptide reads, in one-letter code: TnpB-like protein ORF457 (457 aa).

Residues 1 to 22 (MPPSSGQLLGDEEREPTSTPAI) form a disordered region.

In the N-terminal section; belongs to the transposase 2 family. This sequence in the C-terminal section; belongs to the transposase 35 family.

In Acidianus two-tailed virus (ATV), this protein is TnpB-like protein ORF457.